The following is a 444-amino-acid chain: E1B 55 kDa protein (444 aa).

The disordered stretch occupies residues 1–35 (MEQNADMEPDRQVNQRPPRFRARGAGVRGRGRVRR). Phosphoserine occurs at positions 438 and 439.

It belongs to the adenoviridae E1B 55 kDa protein family. As to quaternary structure, interacts with host PML-4 and PML-5; this interaction promotes efficient subnuclear targeting of E1B-55K to PML nuclear bodies. Interacts with E4-ORF3 protein. Interacts with E4-ORF6 protein.

The protein localises to the host nucleus. It localises to the host cytoplasm. Plays a major role to prevent cellular inhibition of viral genome replication. Assembles an SCF-like E3 ubiquitin ligase complex based on the cellular proteins ELOB, ELOC, CUL5 and RBX1, in cooperation with viral E4orf6. This viral RING-type ligase ubiquitinates cellular substrates and targets them to proteasomal degradation: TP53/p53, LIG4, MRE11-RAD50-NBS1 (MRN) complex, ITGA3, DAXX and BLM. E1B-55K probably acts as the substrate-specific adapter of the SCF-like E3 ubiquitin ligase complex. Degradation of host TP53/p53 activity is essential for preventing E1A-induced TP53 accumulation that would otherwise lead to cell apoptosis and growth arrest. E1B-55K also inactivates TP53 transcription-factor activity by binding its transactivation domain. E1B-55K also functions as a SUMO1 E3 ligase for TP53 which causes the latter to be sequestered in promyelocytic leukemia (PML) nuclear bodies thereby contributing to maximal inhibition of TP53 function. This Canis lupus familiaris (Dog) protein is E1B 55 kDa protein.